The chain runs to 208 residues: Large ribosomal subunit protein bL25 (208 aa).

Belongs to the bacterial ribosomal protein bL25 family. CTC subfamily. As to quaternary structure, part of the 50S ribosomal subunit; part of the 5S rRNA/L5/L18/L25 subcomplex. Contacts the 5S rRNA. Binds to the 5S rRNA independently of L5 and L18.

Functionally, this is one of the proteins that binds to the 5S RNA in the ribosome where it forms part of the central protuberance. The protein is Large ribosomal subunit protein bL25 of Phenylobacterium zucineum (strain HLK1).